The sequence spans 463 residues: Elongation factor 1-alpha (463 aa).

Positions 5–242 (KTHINIVVIG…DAILPPARPT (238 aa)) constitute a tr-type G domain. A G1 region spans residues 14 to 21 (GHVDSGKS). Position 14-21 (14-21 (GHVDSGKS)) interacts with GTP. Residues 70–74 (GITID) are G2. The segment at 91-94 (DAPG) is G3. Residues 91 to 95 (DAPGH) and 153 to 156 (NKMD) each bind GTP. The G4 stretch occupies residues 153-156 (NKMD). A G5 region spans residues 194 to 196 (SGW). 5-glutamyl glycerylphosphorylethanolamine occurs at positions 301 and 374.

Belongs to the TRAFAC class translation factor GTPase superfamily. Classic translation factor GTPase family. EF-Tu/EF-1A subfamily.

The protein localises to the cytoplasm. This protein promotes the GTP-dependent binding of aminoacyl-tRNA to the A-site of ribosomes during protein biosynthesis. The sequence is that of Elongation factor 1-alpha from Bombyx mori (Silk moth).